The following is a 978-amino-acid chain: Glycine dehydrogenase (decarboxylating) (978 aa).

An N6-(pyridoxal phosphate)lysine modification is found at Lys-726.

Belongs to the GcvP family. The glycine cleavage system is composed of four proteins: P, T, L and H. Requires pyridoxal 5'-phosphate as cofactor.

It carries out the reaction N(6)-[(R)-lipoyl]-L-lysyl-[glycine-cleavage complex H protein] + glycine + H(+) = N(6)-[(R)-S(8)-aminomethyldihydrolipoyl]-L-lysyl-[glycine-cleavage complex H protein] + CO2. In terms of biological role, the glycine cleavage system catalyzes the degradation of glycine. The P protein binds the alpha-amino group of glycine through its pyridoxal phosphate cofactor; CO(2) is released and the remaining methylamine moiety is then transferred to the lipoamide cofactor of the H protein. The protein is Glycine dehydrogenase (decarboxylating) of Paraburkholderia phytofirmans (strain DSM 17436 / LMG 22146 / PsJN) (Burkholderia phytofirmans).